The chain runs to 310 residues: Phytoene synthase 2, chloroplastic (310 aa).

A chloroplast-targeting transit peptide spans 1–25; the sequence is DPDIVLPGNLGLLSEAYDRCGEVCA.

This sequence belongs to the phytoene/squalene synthase family. In terms of assembly, monomer.

The protein localises to the plastid. The protein resides in the chloroplast. It carries out the reaction 2 (2E,6E,10E)-geranylgeranyl diphosphate = 15-cis-phytoene + 2 diphosphate. The protein operates within carotenoid biosynthesis; phytoene biosynthesis; all-trans-phytoene from geranylgeranyl diphosphate: step 1/1. Catalyzes the reaction from prephytoene diphosphate to phytoene. This is Phytoene synthase 2, chloroplastic (PSY2) from Solanum lycopersicum (Tomato).